Reading from the N-terminus, the 345-residue chain is Gibberellin receptor GID1A (345 aa).

Residue alanine 2 is modified to N-acetylalanine. Residues 113-115 carry the Involved in the stabilization of the negatively charged intermediate by the formation of the oxyanion hole motif; the sequence is HGG. Gibberellin A4 contacts are provided by residues 115 to 116, tyrosine 127, and serine 191; that span reads GS. 4 residues coordinate gibberellin A3: serine 116, tyrosine 127, serine 191, and phenylalanine 238. Residue serine 191 is part of the active site. The active site involves aspartate 289. Glycine 320 is a binding site for gibberellin A4. Glycine 320 contributes to the gibberellin A3 binding site.

Belongs to the 'GDXG' lipolytic enzyme family. As to quaternary structure, interacts (via N-terminus) with the DELLA proteins GAI, RGA, RGL1, RGL2 and RGL3 (via N-terminus) in a GA-dependent manner. As to expression, widely expressed.

It is found in the nucleus. Functionally, functions as a soluble gibberellin (GA) receptor. GA is an essential hormone that regulates growth and development in plants. Binds with high affinity the biologically active gibberellin GA4, but has no affinity for the biologically inactive GAs. In response to GA, interacts with specific DELLA proteins, known as repressors of GA-induced growth, and targets them for degradation via proteasome. Seems to be required for GA signaling that controls root growth, seed germination, stem elongation and flower development. Partially redundant with GID1B and GID1C. The chain is Gibberellin receptor GID1A (GID1A) from Arabidopsis thaliana (Mouse-ear cress).